Consider the following 957-residue polypeptide: Valine--tRNA ligase (957 aa).

A 'HIGH' region motif is present at residues 47–57 (PNITGQLHLGH). The short motif at 558–562 (KMSKS) is the 'KMSKS' region element. Lys561 contacts ATP. A coiled-coil region spans residues 889–918 (FNKENEINRLKKESELINRKIETIQKLLDD).

It belongs to the class-I aminoacyl-tRNA synthetase family. ValS type 1 subfamily. Monomer.

The protein resides in the cytoplasm. It carries out the reaction tRNA(Val) + L-valine + ATP = L-valyl-tRNA(Val) + AMP + diphosphate. In terms of biological role, catalyzes the attachment of valine to tRNA(Val). As ValRS can inadvertently accommodate and process structurally similar amino acids such as threonine, to avoid such errors, it has a 'posttransfer' editing activity that hydrolyzes mischarged Thr-tRNA(Val) in a tRNA-dependent manner. In Blochmanniella pennsylvanica (strain BPEN), this protein is Valine--tRNA ligase.